The chain runs to 206 residues: Ras-related protein Rab-7b (206 aa).

A GTP-binding site is contributed by 15 to 22; sequence GDSGVGKT. Phosphoserine occurs at positions 17 and 23. Phosphothreonine occurs at positions 34, 40, and 64. Residues 34–40 and 63–67 contribute to the GTP site; these read TQQYRAT and DTAGQ. Residues 37 to 45 carry the Effector region motif; it reads YRATVGADF. Position 72 is a phosphoserine (Ser-72). Phosphotyrosine occurs at positions 78 and 88. Residues 125-128 and 157-158 contribute to the GTP site; these read NKLD and AK. Residues Cys-205 and Cys-206 are each lipidated (S-geranylgeranyl cysteine).

The protein belongs to the small GTPase superfamily. Rab family. In terms of processing, glycosylated.

The protein resides in the cytoplasm. The protein localises to the cytoskeleton. In Paramecium octaurelia, this protein is Ras-related protein Rab-7b.